The primary structure comprises 54 residues: ComX pheromone (54 aa).

Positions Met-1–Tyr-46 are excised as a propeptide. Trp-51 is lipidated: 3'-geranyl-2',N2-cyclotryptophan.

In terms of assembly, interacts directly with the sensor histidine kinase ComP and stimulates its activity. Post-translationally, trp-51 is modified by isoprenylation, probably by geranylation, which is essential for activity. Modified by the tryptophan prenyltransferase ComQ before export to the extracellular environment. The type of isoprenyl derivative differs among the different pherotypes and depends on ComX primary sequence.

The protein resides in the secreted. Its function is as follows. Part of a major quorum-sensing system that regulates the development of genetic competence. Acts through the activation of the two-component regulatory system ComP/ComA composed of a sensor histidine kinase, ComP, and a response regulator, ComA. The protein is ComX pheromone of Bacillus mojavensis.